Consider the following 339-residue polypeptide: Basic membrane protein A (339 aa).

The first 17 residues, 1-17 (MNKILLLILLESIVFLS), serve as a signal peptide directing secretion. A lipid anchor (N-palmitoyl cysteine) is attached at cysteine 18. Cysteine 18 is lipidated: S-diacylglycerol cysteine.

This sequence belongs to the BMP lipoprotein family. In terms of assembly, monomer.

The protein localises to the cell inner membrane. Functionally, immunogenic protein. May be part of an ABC-type nucleoside uptake system involved in the purine salvage pathway. This Borreliella burgdorferi (strain ATCC 35210 / DSM 4680 / CIP 102532 / B31) (Borrelia burgdorferi) protein is Basic membrane protein A (bmpA).